Here is a 197-residue protein sequence, read N- to C-terminus: Elongation factor Ts (197 aa).

Positions 81–84 (TDFV) are involved in Mg(2+) ion dislocation from EF-Tu.

Belongs to the EF-Ts family.

It is found in the cytoplasm. Associates with the EF-Tu.GDP complex and induces the exchange of GDP to GTP. It remains bound to the aminoacyl-tRNA.EF-Tu.GTP complex up to the GTP hydrolysis stage on the ribosome. In Fervidobacterium nodosum (strain ATCC 35602 / DSM 5306 / Rt17-B1), this protein is Elongation factor Ts.